Here is a 589-residue protein sequence, read N- to C-terminus: uncharacterized protein (589 aa).

Disordered regions lie at residues 328 to 365 (LSSTSDASAAPAGVAGGGKARQMQFSQGGSGQGAEDGP), 379 to 459 (SLLG…DPSN), 525 to 555 (RSTSRLDAGEGQGDDDDEEDGQAEKYEGAVK), and 569 to 589 (VRGTKVVVQPSPPGDDSSRDM). Positions 398 to 425 (VSLSSASTSARPTQRRSSLTPCSQTPQE) are enriched in polar residues. Residues 426–445 (THQHAREALTTRMESQREAN) show a composition bias toward basic and acidic residues. Residues 536–545 (QGDDDDEEDG) show a composition bias toward acidic residues.

This is an uncharacterized protein from Mycosarcoma maydis (Corn smut fungus).